The chain runs to 326 residues: Histone-lysine N-methyltransferase Suv4-20 (326 aa).

Residues 163-273 (QECTRYSLEG…AGDEITCFYG (111 aa)) enclose the SET domain. The segment at 294–313 (RGKFSTSDEEENDEPSALSE) is disordered.

This sequence belongs to the class V-like SAM-binding methyltransferase superfamily. Histone-lysine methyltransferase family. Suvar4-20 subfamily.

The protein resides in the nucleus. It localises to the chromosome. The enzyme catalyses N(6)-methyl-L-lysyl(20)-[histone H4] + S-adenosyl-L-methionine = N(6),N(6)-dimethyl-L-lysyl(20)-[histone H4] + S-adenosyl-L-homocysteine + H(+). It carries out the reaction N(6),N(6)-dimethyl-L-lysyl(20)-[histone H4] + S-adenosyl-L-methionine = N(6),N(6),N(6)-trimethyl-L-lysyl(20)-[histone H4] + S-adenosyl-L-homocysteine + H(+). Histone methyltransferase that specifically di- and trimethylates 'Lys-20' of histone H4 (H4K20me2/me3). H4 'Lys-20' trimethylation represents a specific tag for epigenetic transcriptional repression. Contributes to dosage compensation of X chromosome-relative to autosome-linked gene expression, possibly by converting H4K20me1 to H4K20m2/me3 on autosomes. Involved in the regulation of growth and body fat metabolism downstream of the TOR complex 2 pathway. The polypeptide is Histone-lysine N-methyltransferase Suv4-20 (Caenorhabditis briggsae).